The following is a 245-amino-acid chain: Ribonuclease 3 (245 aa).

In terms of domain architecture, RNase III spans 17–146 (FAKKMNELGF…FVGALYLDQG (130 aa)). E59 is a binding site for Mg(2+). Residue D63 is part of the active site. 2 residues coordinate Mg(2+): D132 and E135. The active site involves E135. Residues 172 to 241 (DFKTQFQEYV…AESAYSKLKS (70 aa)) form the DRBM domain. The interval 217–245 (ATGQGKTKKESEQKAAESAYSKLKSNNNL) is disordered.

It belongs to the ribonuclease III family. Homodimer. Mg(2+) serves as cofactor.

Its subcellular location is the cytoplasm. It carries out the reaction Endonucleolytic cleavage to 5'-phosphomonoester.. Digests double-stranded RNA. Involved in the processing of primary rRNA transcript to yield the immediate precursors to the large and small rRNAs (23S and 16S). Processes some mRNAs, and tRNAs when they are encoded in the rRNA operon. Processes pre-crRNA and tracrRNA of type II CRISPR loci if present in the organism. This is Ribonuclease 3 from Staphylococcus haemolyticus (strain JCSC1435).